The primary structure comprises 409 residues: Diels-Alderase ucsH (409 aa).

The helical transmembrane segment at 386-406 (IYFFICMLLAVVTFGYINILE) threads the bilayer.

The protein belongs to the Diels-Alderase family.

The protein localises to the membrane. It participates in mycotoxin biosynthesis. Diels-Alderase; part of the gene cluster that mediates the biosynthesis of UCS1025A, a member of the pyrrolizidinone family that acts as a strong telomerase inhibitor and displays potent antibacterial and antitumor properties. These compounds share a hemiaminal-containing pyrrolizidinone core fused with a gamma-lactone, giving a furopyrrolizidine that is connected to a decalin fragment. The polyketide synthase module (PKS) of the PKS-NRPS ucsA is responsible for the synthesis of the polyketide backbone via the condensation of an acetyl-CoA starter unit with 6 malonyl-CoA units. The downstream nonribosomal peptide synthetase (NRPS) module then amidates the carboxyl end of the polyketide with a 2S,3S-methylproline derived from L-isoleucine by the 2-oxoglutarate-dependent dioxygenase ucsF which converts L-isoleucine to (4S,5S)-4-methylpyrroline-5-carboxylate that is further converted to 2S,3S-methylproline by the pyrroline-5-carboxylate reductase ucsG. Reductive release of the completed aminoacyl polyketide from the assembly line can form the 3-pyrrolin-2-one structure via an intramolecular Knoevenagel reaction. Because ucsA lacks a designated enoylreductase (ER) domain, the required activity is provided the enoyl reductase ucsL. This keto acyclic precursor is the substrate of the Diels-Alderase ucsH, that catalyzes the Diels-Alder cycloaddition. Oxidation of the 3S-methyl group to a carboxylate by the cytochrome P450 monooxygenase ucsK allows an oxa-Michael cyclization that might involve the reductase/dehydrogenase ucsI and which furnishes the furopyrrolizidine. The oxidase ucsJ likely plays a critical role in stereoselective reduction of the C5-C6 double bond to afford the required R-configured carboxylate group. Further enolization and oxidation at C5 by an unidentified enzyme affords the last intermediate that can undergo oxa-Michael cyclization to yield UCS1025A. The chain is Diels-Alderase ucsH from Acremonium sp.